The sequence spans 180 residues: Pro-glucagon (180 aa).

The N-terminal stretch at 1 to 20 (MKSVYFVAGLFIMLAQGSWQ) is a signal peptide. A disordered region spans residues 23–58 (LQDTEEKPRSVSASQTDMLDDPDQMNEDKRHSQGTF). Ser54 is modified (phosphoserine). Residues 84-89 (NRNNIA) constitute a propeptide that is removed on maturation. Phosphoserine is present on residues Ser105 and Ser108. Arg127 bears the Arginine amide mark. The propeptide occupies 131-145 (DFPEEVAIVEELGRR). Phosphoserine is present on residues Ser150 and Ser152.

This sequence belongs to the glucagon family. In terms of processing, proglucagon is post-translationally processed in a tissue-specific manner in pancreatic A cells and intestinal L cells. In pancreatic A cells, the major bioactive hormone is glucagon cleaved by PCSK2/PC2. In the intestinal L cells PCSK1/PC1 liberates GLP-1, GLP-2, glicentin and oxyntomodulin. GLP-1 is further N-terminally truncated by post-translational processing in the intestinal L cells resulting in GLP-1(7-37) GLP-1-(7-36)amide. The C-terminal amidation is neither important for the metabolism of GLP-1 nor for its effects on the endocrine pancreas.

The protein resides in the secreted. Functionally, plays a key role in glucose metabolism and homeostasis. Regulates blood glucose by increasing gluconeogenesis and decreasing glycolysis. A counterregulatory hormone of insulin, raises plasma glucose levels in response to insulin-induced hypoglycemia. Plays an important role in initiating and maintaining hyperglycemic conditions in diabetes. In terms of biological role, potent stimulator of glucose-dependent insulin release. Also stimulates insulin release in response to IL6. Plays important roles on gastric motility and the suppression of plasma glucagon levels. May be involved in the suppression of satiety and stimulation of glucose disposal in peripheral tissues, independent of the actions of insulin. Has growth-promoting activities on intestinal epithelium. May also regulate the hypothalamic pituitary axis (HPA) via effects on LH, TSH, CRH, oxytocin, and vasopressin secretion. Increases islet mass through stimulation of islet neogenesis and pancreatic beta cell proliferation. Inhibits beta cell apoptosis. Stimulates intestinal growth and up-regulates villus height in the small intestine, concomitant with increased crypt cell proliferation and decreased enterocyte apoptosis. The gastrointestinal tract, from the stomach to the colon is the principal target for GLP-2 action. Plays a key role in nutrient homeostasis, enhancing nutrient assimilation through enhanced gastrointestinal function, as well as increasing nutrient disposal. Stimulates intestinal glucose transport and decreases mucosal permeability. Its function is as follows. Significantly reduces food intake. Inhibits gastric emptying in humans. Suppression of gastric emptying may lead to increased gastric distension, which may contribute to satiety by causing a sensation of fullness. Functionally, may modulate gastric acid secretion and the gastro-pyloro-duodenal activity. May play an important role in intestinal mucosal growth in the early period of life. This is Pro-glucagon (GCG) from Cavia porcellus (Guinea pig).